A 283-amino-acid polypeptide reads, in one-letter code: Quinate/shikimate dehydrogenase (NAD(+)) (283 aa).

Residues serine 17, threonine 69, lysine 73, asparagine 94, and aspartate 110 each coordinate shikimate. L-quinate contacts are provided by residues 17–19 (SRT), threonine 69, lysine 73, asparagine 94, and aspartate 110. The Proton acceptor role is filled by lysine 73. NAD(+) contacts are provided by residues 137–138 (GV), aspartate 158, arginine 163, 203–206 (PMGM), alanine 213, valine 228, and glycine 251. Glutamine 258 serves as a coordination point for shikimate. Residue glutamine 258 participates in L-quinate binding.

Belongs to the shikimate dehydrogenase family. Homodimer.

It catalyses the reaction L-quinate + NAD(+) = 3-dehydroquinate + NADH + H(+). The enzyme catalyses shikimate + NAD(+) = 3-dehydroshikimate + NADH + H(+). It participates in metabolic intermediate biosynthesis; chorismate biosynthesis; chorismate from D-erythrose 4-phosphate and phosphoenolpyruvate: step 4/7. Its pathway is aromatic compound metabolism; 3,4-dihydroxybenzoate biosynthesis; 3-dehydroquinate from D-quinate (NAD(+) route). Functionally, involved in the biosynthesis of the chorismate, which leads to the biosynthesis of aromatic amino acids, and plays a key role in the quinate degradation pathway. Catalyzes the NAD(+)-dependent oxidation of both quinate and shikimate to 3-dehydroquinate and 3-dehydroshikimate, respectively. The sequence is that of Quinate/shikimate dehydrogenase (NAD(+)) from Corynebacterium glutamicum (strain R).